Reading from the N-terminus, the 476-residue chain is Aspartyl/glutamyl-tRNA(Asn/Gln) amidotransferase subunit B (476 aa).

This sequence belongs to the GatB/GatE family. GatB subfamily. Heterotrimer of A, B and C subunits.

The enzyme catalyses L-glutamyl-tRNA(Gln) + L-glutamine + ATP + H2O = L-glutaminyl-tRNA(Gln) + L-glutamate + ADP + phosphate + H(+). It catalyses the reaction L-aspartyl-tRNA(Asn) + L-glutamine + ATP + H2O = L-asparaginyl-tRNA(Asn) + L-glutamate + ADP + phosphate + 2 H(+). Functionally, allows the formation of correctly charged Asn-tRNA(Asn) or Gln-tRNA(Gln) through the transamidation of misacylated Asp-tRNA(Asn) or Glu-tRNA(Gln) in organisms which lack either or both of asparaginyl-tRNA or glutaminyl-tRNA synthetases. The reaction takes place in the presence of glutamine and ATP through an activated phospho-Asp-tRNA(Asn) or phospho-Glu-tRNA(Gln). This Listeria innocua serovar 6a (strain ATCC BAA-680 / CLIP 11262) protein is Aspartyl/glutamyl-tRNA(Asn/Gln) amidotransferase subunit B.